We begin with the raw amino-acid sequence, 720 residues long: Methionine--tRNA ligase (720 aa).

The short motif at 27–37 (PYANGQIHIGH) is the 'HIGH' region element. 4 residues coordinate Zn(2+): cysteine 158, cysteine 161, cysteine 171, and cysteine 174. The 'KMSKS' region motif lies at 348–352 (KMSKS). Position 351 (lysine 351) interacts with ATP. Residues 614 to 720 (DFAKVDLRIA…SGAKPGMRVK (107 aa)) enclose the tRNA-binding domain.

Belongs to the class-I aminoacyl-tRNA synthetase family. MetG type 1 subfamily. In terms of assembly, homodimer. Zn(2+) serves as cofactor.

It is found in the cytoplasm. It catalyses the reaction tRNA(Met) + L-methionine + ATP = L-methionyl-tRNA(Met) + AMP + diphosphate. Its function is as follows. Is required not only for elongation of protein synthesis but also for the initiation of all mRNA translation through initiator tRNA(fMet) aminoacylation. The chain is Methionine--tRNA ligase from Burkholderia ambifaria (strain MC40-6).